We begin with the raw amino-acid sequence, 501 residues long: Glucans biosynthesis protein G (501 aa).

Positions 1-25 (MNRRQVLTGLAALPLLQAKPDPAAA) are cleaved as a signal peptide.

This sequence belongs to the OpgD/OpgG family.

Its subcellular location is the periplasm. It participates in glycan metabolism; osmoregulated periplasmic glucan (OPG) biosynthesis. Involved in the biosynthesis of osmoregulated periplasmic glucans (OPGs). This Rhodopseudomonas palustris (strain ATCC BAA-98 / CGA009) protein is Glucans biosynthesis protein G.